Consider the following 475-residue polypeptide: Probable proline--tRNA ligase, mitochondrial (475 aa).

The transit peptide at 1–29 directs the protein to the mitochondrion; the sequence is MEGLLTRCRTLSALATCSLRHSRCIVRKC.

The protein belongs to the class-II aminoacyl-tRNA synthetase family.

It is found in the mitochondrion matrix. The enzyme catalyses tRNA(Pro) + L-proline + ATP = L-prolyl-tRNA(Pro) + AMP + diphosphate. Its function is as follows. Mitochondrial aminoacyl-tRNA synthetase that catalyzes the specific attachment of the proline amino acid (aa) to the homologous transfer RNA (tRNA), further participating in protein synthesis. The reaction occurs in a two steps: proline is first activated by ATP to form Pro-AMP and then transferred to the acceptor end of tRNA(Pro). The polypeptide is Probable proline--tRNA ligase, mitochondrial (Pars2) (Rattus norvegicus (Rat)).